We begin with the raw amino-acid sequence, 358 residues long: Histidinol-phosphate aminotransferase (358 aa).

Position 218 is an N6-(pyridoxal phosphate)lysine (Lys218).

The protein belongs to the class-II pyridoxal-phosphate-dependent aminotransferase family. Histidinol-phosphate aminotransferase subfamily. Homodimer. It depends on pyridoxal 5'-phosphate as a cofactor.

It carries out the reaction L-histidinol phosphate + 2-oxoglutarate = 3-(imidazol-4-yl)-2-oxopropyl phosphate + L-glutamate. The protein operates within amino-acid biosynthesis; L-histidine biosynthesis; L-histidine from 5-phospho-alpha-D-ribose 1-diphosphate: step 7/9. This is Histidinol-phosphate aminotransferase from Dehalococcoides mccartyi (strain ATCC BAA-2266 / KCTC 15142 / 195) (Dehalococcoides ethenogenes (strain 195)).